Reading from the N-terminus, the 456-residue chain is MTTLTPIHVIGGGLAGTEAAWQIAQAGVPVILTEMRPERLSPAHHSEDLAELVCSNSFGAKAGDRAAGLLQTELRQLSSLIITTADRHAVPAGGALAVDRGIFSRSLTEQVASHPLVELRRGEVTEIPREGITVLTTGPLTSPALTEDLQQFTGMEYLSFFDAASPIVVGDSINKEVAFFASRYDKGEAAYLNCPFNREQYFNFWQALCEAEQAPLKDFDRETAKFFEGCLPIEELAQRGEDTMRYGPLKPVGLFDARLGDFRDPANKEKKPYAVVQLRQEDKAGQLWNMVGFQTNLRWGEQGRVFRLIPGLENAEFVRMGVMHRNTFINSPQLLTASLHFGDRQTLFAAGQLVGTEGYAAATAGGWLAGTNAARLALGLPLLTLPATTMMGALFNFISSASPKHFQPMPPNFGILPELPQRIRNKQERYGQYRDRALADLTTWQTSIKSLATCRV.

Residue 11–16 (GGGLAG) coordinates FAD.

This sequence belongs to the MnmG family. TrmFO subfamily. It depends on FAD as a cofactor.

The protein resides in the cytoplasm. The enzyme catalyses uridine(54) in tRNA + (6R)-5,10-methylene-5,6,7,8-tetrahydrofolate + NADH + H(+) = 5-methyluridine(54) in tRNA + (6S)-5,6,7,8-tetrahydrofolate + NAD(+). It carries out the reaction uridine(54) in tRNA + (6R)-5,10-methylene-5,6,7,8-tetrahydrofolate + NADPH + H(+) = 5-methyluridine(54) in tRNA + (6S)-5,6,7,8-tetrahydrofolate + NADP(+). Catalyzes the folate-dependent formation of 5-methyl-uridine at position 54 (M-5-U54) in all tRNAs. The polypeptide is Methylenetetrahydrofolate--tRNA-(uracil-5-)-methyltransferase TrmFO (Synechocystis sp. (strain ATCC 27184 / PCC 6803 / Kazusa)).